We begin with the raw amino-acid sequence, 514 residues long: GMP synthase [glutamine-hydrolyzing] (514 aa).

The Glutamine amidotransferase type-1 domain occupies 9–199; that stretch reads MILVLDFGGQ…LFEVCQCTGD (191 aa). Cysteine 86 functions as the Nucleophile in the catalytic mechanism. Residues histidine 173 and glutamate 175 contribute to the active site. The region spanning 200–389 is the GMPS ATP-PPase domain; that stretch reads WSMENFIEIE…LGLSDEIVWR (190 aa). 227-233 contributes to the ATP binding site; the sequence is SGGVDSS.

As to quaternary structure, homodimer.

It catalyses the reaction XMP + L-glutamine + ATP + H2O = GMP + L-glutamate + AMP + diphosphate + 2 H(+). It participates in purine metabolism; GMP biosynthesis; GMP from XMP (L-Gln route): step 1/1. Functionally, catalyzes the synthesis of GMP from XMP. The polypeptide is GMP synthase [glutamine-hydrolyzing] (Exiguobacterium sibiricum (strain DSM 17290 / CCUG 55495 / CIP 109462 / JCM 13490 / 255-15)).